Reading from the N-terminus, the 198-residue chain is Nuclear transcription factor Y subunit A-4 (198 aa).

Residues 1-47 are disordered; that stretch reads MTSSVHELSDNNESHAKKERPDSQTRPQVPSGRSSESIDTNSVYSEP. Over residues 7–23 the composition is skewed to basic and acidic residues; sequence ELSDNNESHAKKERPDS. A compositionally biased stretch (polar residues) spans 24–44; sequence QTRPQVPSGRSSESIDTNSVY. Positions 101-124 match the Subunit association domain (SAD) motif; it reads FVNAKQYHGILRRRQSRAKLEARN. Positions 131–156 form a DNA-binding region, NFYA/HAP2-type; it reads KPYMHESRHLHAIRRPRGCGGRFLNA. Residues 136–198 form a disordered region; the sequence is ESRHLHAIRR…MATSGPNGRS (63 aa). Residues 156–166 are compositionally biased toward basic and acidic residues; that stretch reads AKKENGDHKEE.

This sequence belongs to the NFYA/HAP2 subunit family. Heterotrimeric transcription factor composed of three components, NF-YA, NF-YB and NF-YC. NF-YB and NF-YC must interact and dimerize for NF-YA association and DNA binding. Expressed in stems, caulines, and senescent flowers.

The protein localises to the nucleus. Stimulates the transcription of various genes by recognizing and binding to a CCAAT motif in promoters. The protein is Nuclear transcription factor Y subunit A-4 (NFYA4) of Arabidopsis thaliana (Mouse-ear cress).